The chain runs to 316 residues: Small ribosomal subunit protein RACK1 (316 aa).

7 WD repeats span residues 4–46 (QMTL…WRLT), 52–93 (YGVP…WDLS), 94–135 (TGQT…WNTL), 137–180 (VCKY…WNLT), 181–221 (NCKL…LWDL), 222–263 (NEGK…WDLE), and 264–312 (GKVV…WQVS).

The protein belongs to the WD repeat G protein beta family. Ribosomal protein RACK1 subfamily.

This chain is Small ribosomal subunit protein RACK1, found in Biomphalaria glabrata (Bloodfluke planorb).